The chain runs to 208 residues: Flavin-dependent thymidylate synthase (208 aa).

A ThyX domain is found at 1-208 (MEVICKHYTP…QYLFEDCLKH (208 aa)). FAD contacts are provided by residues serine 50 and 74-76 (RHR). DUMP-binding positions include 71 to 74 (ELSR), 84 to 86 (SSR), and lysine 147. The short motif at 74-84 (RHRIASLSVKS) is the ThyX motif element. Residues 163–165 (NAR) and asparagine 169 contribute to the FAD site. Position 174 (arginine 174) interacts with dUMP. Catalysis depends on arginine 174, which acts as the Involved in ionization of N3 of dUMP, leading to its activation.

It belongs to the thymidylate synthase ThyX family. As to quaternary structure, homotetramer. Requires FAD as cofactor.

It catalyses the reaction dUMP + (6R)-5,10-methylene-5,6,7,8-tetrahydrofolate + NADPH + H(+) = dTMP + (6S)-5,6,7,8-tetrahydrofolate + NADP(+). Its pathway is pyrimidine metabolism; dTTP biosynthesis. In terms of biological role, catalyzes the reductive methylation of 2'-deoxyuridine-5'-monophosphate (dUMP) to 2'-deoxythymidine-5'-monophosphate (dTMP) while utilizing 5,10-methylenetetrahydrofolate (mTHF) as the methyl donor, and NAD(P)H and FADH(2) as the reductant. The sequence is that of Flavin-dependent thymidylate synthase from Helicobacter pylori (strain ATCC 700392 / 26695) (Campylobacter pylori).